Here is a 157-residue protein sequence, read N- to C-terminus: Cell cycle control protein 50C (157 aa).

Residues 1-34 (MEERAQHCLSRLLDNSALKQQELPIHRLYFTARR) are Cytoplasmic-facing. The helical transmembrane segment at 35-55 (VLFVFFATGIFCLCMGIILIL) threads the bilayer. Residues 56–157 (SARSTQEIEI…LFLNQVDFSV (102 aa)) are Extracellular-facing. Asn66 is a glycosylation site (N-linked (GlcNAc...) asparagine).

Belongs to the CDC50/LEM3 family.

It is found in the membrane. The sequence is that of Cell cycle control protein 50C (TMEM30C) from Pan troglodytes (Chimpanzee).